Consider the following 219-residue polypeptide: HTH-type transcriptional regulator LutR (219 aa).

The 56-residue stretch at 1–56 (MIKNGELKPGDKLDSVQALAESFQVSRSAVREALSALKAMGLVEMKQGEGTYLKEF) folds into the HTH gntR-type domain. A DNA-binding region (H-T-H motif) is located at residues 16–35 (VQALAESFQVSRSAVREALS).

Its function is as follows. Negatively regulates the transcription of the lutABC operon, which is required for L-lactate utilization. LutR activity is regulated by lactate, since presence of L-lactate, that probably binds to LutR, leads to derepression of the operon. Also appears to be essential for bacilysin biosynthesis. This Bacillus subtilis (strain 168) protein is HTH-type transcriptional regulator LutR (lutR).